Consider the following 327-residue polypeptide: Glycerol-3-phosphate dehydrogenase [NAD(P)+] (327 aa).

NADPH is bound by residues Trp-13, His-33, and Lys-102. 3 residues coordinate sn-glycerol 3-phosphate: Lys-102, Gly-130, and Ser-132. An NADPH-binding site is contributed by Ala-134. The sn-glycerol 3-phosphate site is built by Lys-185, Asp-238, Ser-248, Arg-249, and Asn-250. Residue Lys-185 is the Proton acceptor of the active site. Arg-249 serves as a coordination point for NADPH. Glu-275 provides a ligand contact to NADPH.

This sequence belongs to the NAD-dependent glycerol-3-phosphate dehydrogenase family.

Its subcellular location is the cytoplasm. It catalyses the reaction sn-glycerol 3-phosphate + NAD(+) = dihydroxyacetone phosphate + NADH + H(+). It carries out the reaction sn-glycerol 3-phosphate + NADP(+) = dihydroxyacetone phosphate + NADPH + H(+). It functions in the pathway membrane lipid metabolism; glycerophospholipid metabolism. Functionally, catalyzes the reduction of the glycolytic intermediate dihydroxyacetone phosphate (DHAP) to sn-glycerol 3-phosphate (G3P), the key precursor for phospholipid synthesis. This Vesicomyosocius okutanii subsp. Calyptogena okutanii (strain HA) protein is Glycerol-3-phosphate dehydrogenase [NAD(P)+].